Consider the following 382-residue polypeptide: Glutamyl-tRNA reductase (382 aa).

Substrate contacts are provided by residues 38–41, serine 85, 90–92, and glutamine 96; these read TCNR and ENQ. Cysteine 39 functions as the Nucleophile in the catalytic mechanism. An NADP(+)-binding site is contributed by 164-169; the sequence is GAGEIG.

The protein belongs to the glutamyl-tRNA reductase family. Homodimer.

The enzyme catalyses (S)-4-amino-5-oxopentanoate + tRNA(Glu) + NADP(+) = L-glutamyl-tRNA(Glu) + NADPH + H(+). It functions in the pathway porphyrin-containing compound metabolism; protoporphyrin-IX biosynthesis; 5-aminolevulinate from L-glutamyl-tRNA(Glu): step 1/2. Catalyzes the NADPH-dependent reduction of glutamyl-tRNA(Glu) to glutamate 1-semialdehyde (GSA). This is Glutamyl-tRNA reductase from Methanococcus maripaludis (strain C7 / ATCC BAA-1331).